The chain runs to 423 residues: Probable peptidoglycan glycosyltransferase FtsW (423 aa).

Residues 1 to 53 (MNLKEKLFPENRLGLNRFWNFSRGGIDNFRTGLRDAVSGVEQTRSRMMEYDQL) are Cytoplasmic-facing. The chain crosses the membrane as a helical span at residues 54 to 74 (LVWAILSLMLIGLVMVYSASI). At 75–88 (TLADGPKYANYSSN) the chain is on the periplasmic side. The helical transmembrane segment at 89–109 (FFLIRHMISLAIAIGVGIWAF) threads the bilayer. Over 110–119 (KIPTKVWDRY) the chain is Cytoplasmic. Residues 120 to 140 (SPVIFGITVLLLIAVLIPGVG) form a helical membrane-spanning segment. Topologically, residues 141–149 (RGVNGAKRW) are periplasmic. Residues 150-170 (IPLGLMNFQSSELMKFAAVIF) form a helical membrane-spanning segment. Residues 171-184 (AASYTVQRQEYLHS) are Cytoplasmic-facing. Residues 185 to 205 (FVKGMLPMGIAVALVGGLLMA) traverse the membrane as a helical segment. Residues 206–208 (EPD) lie on the Periplasmic side of the membrane. Residues 209–229 (MGAFVVVALIAFGILFLGGIN) traverse the membrane as a helical segment. Topologically, residues 230–231 (AK) are cytoplasmic. Residues 232 to 252 (LFGGLIAVGLMSGATMIAFSP) form a helical membrane-spanning segment. Residues 253–310 (LRRGRMLAFMDPWQVDNAANKGYQLTHSLMAFGRGEWFGTGLGGSVEKLHYLPEAHTD) are Periplasmic-facing. The helical transmembrane segment at 311 to 331 (FIMAVIGEELGFVGVVVMIFL) threads the bilayer. Residues 332 to 359 (FYWIVRRAFLIGRTALQLDRSFAGLAAK) are Cytoplasmic-facing. The chain crosses the membrane as a helical span at residues 360 to 380 (GVAIWIGWQAFINMGVNLGLL). Residues 381–386 (PTKGLT) lie on the Periplasmic side of the membrane. A helical transmembrane segment spans residues 387 to 407 (LPLVSYGGSGILMNAVAMAML). Topologically, residues 408–423 (LRIDFENRILMRGGKL) are cytoplasmic.

Belongs to the SEDS family. FtsW subfamily.

It localises to the cell inner membrane. The enzyme catalyses [GlcNAc-(1-&gt;4)-Mur2Ac(oyl-L-Ala-gamma-D-Glu-L-Lys-D-Ala-D-Ala)](n)-di-trans,octa-cis-undecaprenyl diphosphate + beta-D-GlcNAc-(1-&gt;4)-Mur2Ac(oyl-L-Ala-gamma-D-Glu-L-Lys-D-Ala-D-Ala)-di-trans,octa-cis-undecaprenyl diphosphate = [GlcNAc-(1-&gt;4)-Mur2Ac(oyl-L-Ala-gamma-D-Glu-L-Lys-D-Ala-D-Ala)](n+1)-di-trans,octa-cis-undecaprenyl diphosphate + di-trans,octa-cis-undecaprenyl diphosphate + H(+). Its pathway is cell wall biogenesis; peptidoglycan biosynthesis. Functionally, peptidoglycan polymerase that is essential for cell division. The chain is Probable peptidoglycan glycosyltransferase FtsW from Polynucleobacter necessarius subsp. necessarius (strain STIR1).